We begin with the raw amino-acid sequence, 115 residues long: MNPLIQSLTEGQLRTDIPAFRPGDTVRVHAKVVEGTRERIQIFEGVVIARKGAGISENYTVRKISNGVGVERTFPIHTPRVDKIEVVRYGKVRRAKLYYLRALQGKAARIKEIRR.

The protein belongs to the bacterial ribosomal protein bL19 family.

In terms of biological role, this protein is located at the 30S-50S ribosomal subunit interface and may play a role in the structure and function of the aminoacyl-tRNA binding site. This is Large ribosomal subunit protein bL19 from Streptococcus gordonii (strain Challis / ATCC 35105 / BCRC 15272 / CH1 / DL1 / V288).